A 323-amino-acid chain; its full sequence is Prostaglandin-E(2) 9-reductase (323 aa).

NADP(+) is bound by residues 23–24 and Asp50; that span reads TY. Tyr24 lines the substrate pocket. Tyr55 (proton donor) is an active-site residue. His117 serves as a coordination point for substrate. Residues 166 to 167, Gln190, 216 to 221, and 270 to 280 each bind NADP(+); these read SN, YSALGS, and KSFTEKRIKEN.

It belongs to the aldo/keto reductase family.

It localises to the cytoplasm. The enzyme catalyses prostaglandin F2alpha + NADP(+) = prostaglandin E2 + NADPH + H(+). It carries out the reaction (17R,20S)-17,20-dihydroxypregn-4-en-3-one + NADP(+) = 17alpha-hydroxyprogesterone + NADPH + H(+). The catalysed reaction is (17R,20S)-17,20-dihydroxypregn-4-en-3-one + NAD(+) = 17alpha-hydroxyprogesterone + NADH + H(+). Its function is as follows. Can convert prostaglandin E2 to prostaglandin F2-alpha. The chain is Prostaglandin-E(2) 9-reductase (AKR1C5) from Oryctolagus cuniculus (Rabbit).